The chain runs to 165 residues: ER membrane protein complex subunit 5 (165 aa).

The Cytoplasmic segment spans residues 1–3 (MAP). A helical transmembrane segment spans residues 4 to 22 (SLWKGLVGIGLFALAHAAF). Residues 23 to 77 (SAAQHYFPSSGIKWKRKCEFLQSSSFQDKIFRSMYYVYDRSYMRLTEKEDESLPI) lie on the Lumenal side of the membrane. A helical membrane pass occupies residues 78-97 (DIVLQTLLAFAVTCYGIVHI). Residues 98-165 (AGEFKDMDAT…KLRKLESLRR (68 aa)) are Cytoplasmic-facing. Residue S154 is modified to Phosphoserine.

It belongs to the membrane magnesium transporter (TC 1.A.67) family. Component of the ER membrane protein complex (EMC).

It localises to the endoplasmic reticulum membrane. It is found in the golgi apparatus membrane. Its subcellular location is the early endosome membrane. Functionally, part of the endoplasmic reticulum membrane protein complex (EMC) that enables the energy-independent insertion into endoplasmic reticulum membranes of newly synthesized membrane proteins. Preferentially accommodates proteins with transmembrane domains that are weakly hydrophobic or contain destabilizing features such as charged and aromatic residues. Involved in the cotranslational insertion of multi-pass membrane proteins in which stop-transfer membrane-anchor sequences become ER membrane spanning helices. It is also required for the post-translational insertion of tail-anchored/TA proteins in endoplasmic reticulum membranes. By mediating the proper cotranslational insertion of N-terminal transmembrane domains in an N-exo topology, with translocated N-terminus in the lumen of the ER, controls the topology of multi-pass membrane proteins like the G protein-coupled receptors. By regulating the insertion of various proteins in membranes, it is indirectly involved in many cellular processes. May be involved in Mg(2+) transport. The polypeptide is ER membrane protein complex subunit 5 (Bos taurus (Bovine)).